Reading from the N-terminus, the 497-residue chain is Arabinose import ATP-binding protein AraG (497 aa).

ABC transporter domains lie at 6 to 242 (LRFD…MVGR) and 250 to 497 (FRPR…ALPA). ATP is bound at residue 38 to 45 (GENGAGKS).

This sequence belongs to the ABC transporter superfamily. Arabinose importer (TC 3.A.1.2.2) family. In terms of assembly, the complex is composed of two ATP-binding proteins (AraG), two transmembrane proteins (AraH) and a solute-binding protein (AraF).

The protein localises to the cell inner membrane. It catalyses the reaction L-arabinose(out) + ATP + H2O = L-arabinose(in) + ADP + phosphate + H(+). In terms of biological role, part of the ABC transporter complex AraFGH involved in arabinose import. Responsible for energy coupling to the transport system. This is Arabinose import ATP-binding protein AraG from Chromohalobacter salexigens (strain ATCC BAA-138 / DSM 3043 / CIP 106854 / NCIMB 13768 / 1H11).